Reading from the N-terminus, the 76-residue chain is U-scoloptoxin(13)-Sm1a (76 aa).

An N-terminal signal peptide occupies residues 1 to 22; it reads MAYICAXTLAFLLCVNTGIIQA.

This sequence belongs to the scoloptoxin-13 family. Contains 4 disulfide bonds. Expressed by the venom gland.

It is found in the secreted. This Scolopendra morsitans (Tanzanian blue ringleg centipede) protein is U-scoloptoxin(13)-Sm1a.